Here is an 82-residue protein sequence, read N- to C-terminus: UPF0512 protein P (82 aa).

It belongs to the UPF0512 family.

The chain is UPF0512 protein P from Dictyostelium discoideum (Social amoeba).